The following is a 561-amino-acid chain: uncharacterized protein (561 aa).

2 disordered regions span residues 20 to 42 (IQEQATSDTKPESSPDINLGCSP) and 82 to 283 (QIGS…STPF). Basic and acidic residues predominate over residues 103–131 (DKISEDTDQERVVVCESLENKSSSKDKSP). 2 stretches are compositionally biased toward basic residues: residues 135-156 (RSPKRHKSSKKHKSSKKHKSSK) and 165-185 (KSSKRHKSHKKKDKSHKKRYR). Basic and acidic residues-rich tracts occupy residues 192–203 (SLSRDRSSSRDR), 211–247 (YSRDRSLSRDRSLSRDRSLSRDRSPPRDRSLSRDRSP), and 259–272 (PLRDRSPTRDRSVS).

This sequence belongs to the mimivirus L41 family.

This is an uncharacterized protein from Acanthamoeba polyphaga (Amoeba).